The sequence spans 333 residues: DNA-directed RNA polymerase subunit alpha (333 aa).

The segment at 1–233 (MVREKVKVST…NLFIPFLHVE (233 aa)) is alpha N-terminal domain (alpha-NTD). Residues 267 to 333 (LVFQYIFIDQ…LEKNRKFISN (67 aa)) form an alpha C-terminal domain (alpha-CTD) region.

This sequence belongs to the RNA polymerase alpha chain family. In terms of assembly, in plastids the minimal PEP RNA polymerase catalytic core is composed of four subunits: alpha, beta, beta', and beta''. When a (nuclear-encoded) sigma factor is associated with the core the holoenzyme is formed, which can initiate transcription.

It localises to the plastid. The protein localises to the chloroplast. It carries out the reaction RNA(n) + a ribonucleoside 5'-triphosphate = RNA(n+1) + diphosphate. Its function is as follows. DNA-dependent RNA polymerase catalyzes the transcription of DNA into RNA using the four ribonucleoside triphosphates as substrates. The protein is DNA-directed RNA polymerase subunit alpha of Aethionema grandiflorum (Persian stone-cress).